Here is a 404-residue protein sequence, read N- to C-terminus: Cysteine desulfurase IscS (404 aa).

Pyridoxal 5'-phosphate contacts are provided by residues 75–76 (AT), Asn155, Gln183, and 203–205 (SGH). Residue Lys206 is modified to N6-(pyridoxal phosphate)lysine. Thr243 lines the pyridoxal 5'-phosphate pocket. The active-site Cysteine persulfide intermediate is the Cys328. Cys328 contributes to the [2Fe-2S] cluster binding site.

The protein belongs to the class-V pyridoxal-phosphate-dependent aminotransferase family. NifS/IscS subfamily. In terms of assembly, homodimer. Forms a heterotetramer with IscU, interacts with other sulfur acceptors. Pyridoxal 5'-phosphate serves as cofactor.

It localises to the cytoplasm. The catalysed reaction is (sulfur carrier)-H + L-cysteine = (sulfur carrier)-SH + L-alanine. The protein operates within cofactor biosynthesis; iron-sulfur cluster biosynthesis. Functionally, master enzyme that delivers sulfur to a number of partners involved in Fe-S cluster assembly, tRNA modification or cofactor biosynthesis. Catalyzes the removal of elemental sulfur atoms from cysteine to produce alanine. Functions as a sulfur delivery protein for Fe-S cluster synthesis onto IscU, an Fe-S scaffold assembly protein, as well as other S acceptor proteins. This is Cysteine desulfurase IscS from Shewanella sp. (strain ANA-3).